The chain runs to 88 residues: Small ribosomal subunit protein uS15 (88 aa).

This sequence belongs to the universal ribosomal protein uS15 family. As to quaternary structure, part of the 30S ribosomal subunit. Forms a bridge to the 50S subunit in the 70S ribosome, contacting the 23S rRNA.

Its function is as follows. One of the primary rRNA binding proteins, it binds directly to 16S rRNA where it helps nucleate assembly of the platform of the 30S subunit by binding and bridging several RNA helices of the 16S rRNA. Forms an intersubunit bridge (bridge B4) with the 23S rRNA of the 50S subunit in the ribosome. The sequence is that of Small ribosomal subunit protein uS15 from Mycoplasma mobile (strain ATCC 43663 / 163K / NCTC 11711) (Mesomycoplasma mobile).